Reading from the N-terminus, the 686-residue chain is Translation initiation factor IF-2 (686 aa).

A disordered region spans residues 54–105 (KPSVADEFEVEEKVVRSKKNSNKKKKKGKGNEDKRQENFAGRQQTQTVETPD). Over residues 69–81 (RSKKNSNKKKKKG) the composition is skewed to basic residues. The tr-type G domain maps to 188–357 (ERPAVVTIMG…LLVSEVEEYK (170 aa)). The interval 197-204 (GHVDHGKT) is G1. Position 197–204 (197–204 (GHVDHGKT)) interacts with GTP. The segment at 222–226 (GITQH) is G2. Residues 243 to 246 (DTPG) are G3. GTP contacts are provided by residues 243 to 247 (DTPGH) and 297 to 300 (NKMD). Residues 297-300 (NKMD) are G4. The segment at 333 to 335 (SAI) is G5.

This sequence belongs to the TRAFAC class translation factor GTPase superfamily. Classic translation factor GTPase family. IF-2 subfamily.

The protein localises to the cytoplasm. One of the essential components for the initiation of protein synthesis. Protects formylmethionyl-tRNA from spontaneous hydrolysis and promotes its binding to the 30S ribosomal subunits. Also involved in the hydrolysis of GTP during the formation of the 70S ribosomal complex. The chain is Translation initiation factor IF-2 from Bacillus cereus (strain 03BB102).